The sequence spans 233 residues: VIGGDECNINEHRFLALLYSERFQCGGTLINEEWVLTAAHCDMGNMYIYLGVHNVSVQYDDEQRRYPKKKYFCLSSRNYNQWDNDIMLIRLNRPVRNSAHIAPLSLPSGPPSVGSVCRVMGWGTITSPNETYPDVPHCANINILDYEVCRAAYAGLPATSRTLCAGILEGGKDSCRGDSGGPLICNGEIQGIVSWGGNICAQPREPGLYTKVFDYIDWIQSIIAGNTTVNCPP.

The Peptidase S1 domain occupies 1-224 (VIGGDECNIN…YIDWIQSIIA (224 aa)). Disulfide bonds link cysteine 7/cysteine 138, cysteine 25/cysteine 41, cysteine 73/cysteine 231, cysteine 117/cysteine 185, cysteine 149/cysteine 164, and cysteine 175/cysteine 200. Histidine 40 serves as the catalytic Charge relay system. Residue asparagine 54 is glycosylated (N-linked (GlcNAc...) asparagine). Aspartate 85 functions as the Charge relay system in the catalytic mechanism. Asparagine 129 carries an N-linked (GlcNAc...) asparagine glycan. The Cell attachment site motif lies at 176 to 178 (RGD). Catalysis depends on serine 179, which acts as the Charge relay system. Asparagine 226 carries an N-linked (GlcNAc...) asparagine glycan.

This sequence belongs to the peptidase S1 family. Snake venom subfamily. As to quaternary structure, heterodimer of the brevinase A chain and the brevinase B chain. In terms of tissue distribution, expressed by the venom gland.

It localises to the secreted. Its activity is regulated as follows. The fibrinolytic activity is completely inhibited by PMSF, diisopropylfluorophosphate (DFP), pefabloc, dithiothreitol (DTT) and Zn(2+), but not by Pepstatin A, E64, iodoacetate, chymostatin, tosyl-Lphenylalanine chloromethyl ketone (TPCK), soybean trypsin inhibitor (SBTI), phosphoramidon, Ca(2+), Co(2+), Cu(2+), Fe(2+), Mg(2+), Mn(2+), K(+), and Na(+). In terms of biological role, snake venom serine protease that has fibrinogenolytic activities. Preferentially cleaves the Bbeta-chain (FGB) and more slowly the Aa-chain (FGA) of fibrinogen, but does not affect the gamma-chain. Also has fibrinolytic activity. May play a role in antithrombotic reaction as well as thrombolytic reaction. The sequence is that of Beta-fibrinogenase brevinase from Gloydius blomhoffii (Mamushi).